The chain runs to 210 residues: Ribosomal RNA large subunit methyltransferase E (210 aa).

Gly64, Trp66, Asp84, Asn100, and Asp125 together coordinate S-adenosyl-L-methionine. Catalysis depends on Lys165, which acts as the Proton acceptor.

Belongs to the class I-like SAM-binding methyltransferase superfamily. RNA methyltransferase RlmE family.

It is found in the cytoplasm. It carries out the reaction uridine(2552) in 23S rRNA + S-adenosyl-L-methionine = 2'-O-methyluridine(2552) in 23S rRNA + S-adenosyl-L-homocysteine + H(+). Specifically methylates the uridine in position 2552 of 23S rRNA at the 2'-O position of the ribose in the fully assembled 50S ribosomal subunit. The chain is Ribosomal RNA large subunit methyltransferase E from Buchnera aphidicola subsp. Baizongia pistaciae (strain Bp).